Here is a 640-residue protein sequence, read N- to C-terminus: DNA mismatch repair protein MutL (640 aa).

A disordered region spans residues 343-389 (TKNTATDQRAENLEVKPDSKEKELQPKESQHPRLVACDLPSGKIMPP). Residues 350 to 373 (QRAENLEVKPDSKEKELQPKESQH) are compositionally biased toward basic and acidic residues.

The protein belongs to the DNA mismatch repair MutL/HexB family.

In terms of biological role, this protein is involved in the repair of mismatches in DNA. It is required for dam-dependent methyl-directed DNA mismatch repair. May act as a 'molecular matchmaker', a protein that promotes the formation of a stable complex between two or more DNA-binding proteins in an ATP-dependent manner without itself being part of a final effector complex. The sequence is that of DNA mismatch repair protein MutL from Desulforamulus reducens (strain ATCC BAA-1160 / DSM 100696 / MI-1) (Desulfotomaculum reducens).